A 174-amino-acid chain; its full sequence is uncharacterized protein (174 aa).

A disordered region spans residues 138–174 (VNLTSKSSGRSDEEGTTRRAPVLKTRADFVSRKDKHR). The span at 162–174 (TRADFVSRKDKHR) shows a compositional bias: basic and acidic residues.

This is an uncharacterized protein from Bos taurus (Bovine).